The sequence spans 198 residues: Recombination protein RecR (198 aa).

The C4-type zinc-finger motif lies at 58 to 73 (CSVCGNYTDTDPCAIC). Residues 81-175 (SLVCVVEEPK…KVTRIAHGIP (95 aa)) enclose the Toprim domain.

It belongs to the RecR family.

Functionally, may play a role in DNA repair. It seems to be involved in an RecBC-independent recombinational process of DNA repair. It may act with RecF and RecO. The sequence is that of Recombination protein RecR from Clostridium acetobutylicum (strain ATCC 824 / DSM 792 / JCM 1419 / IAM 19013 / LMG 5710 / NBRC 13948 / NRRL B-527 / VKM B-1787 / 2291 / W).